Consider the following 606-residue polypeptide: Elongation factor 4 (606 aa).

The region spanning 10 to 192 (KNIRNFSIIA…ALVARVPPPQ (183 aa)) is the tr-type G domain. GTP contacts are provided by residues 22 to 27 (DHGKST) and 139 to 142 (NKID).

This sequence belongs to the TRAFAC class translation factor GTPase superfamily. Classic translation factor GTPase family. LepA subfamily.

It is found in the cell inner membrane. It catalyses the reaction GTP + H2O = GDP + phosphate + H(+). In terms of biological role, required for accurate and efficient protein synthesis under certain stress conditions. May act as a fidelity factor of the translation reaction, by catalyzing a one-codon backward translocation of tRNAs on improperly translocated ribosomes. Back-translocation proceeds from a post-translocation (POST) complex to a pre-translocation (PRE) complex, thus giving elongation factor G a second chance to translocate the tRNAs correctly. Binds to ribosomes in a GTP-dependent manner. This chain is Elongation factor 4, found in Nitrosococcus oceani (strain ATCC 19707 / BCRC 17464 / JCM 30415 / NCIMB 11848 / C-107).